The following is a 395-amino-acid chain: Acetate kinase (395 aa).

A Mg(2+)-binding site is contributed by Asn-7. ATP is bound at residue Lys-14. Arg-90 is a substrate binding site. Catalysis depends on Asp-147, which acts as the Proton donor/acceptor. ATP-binding positions include 207–211, 282–284, and 330–334; these read HLGNG, DFR, and GLGEN. Residue Glu-383 coordinates Mg(2+).

The protein belongs to the acetokinase family. In terms of assembly, homodimer. It depends on Mg(2+) as a cofactor. Requires Mn(2+) as cofactor.

It localises to the cytoplasm. The catalysed reaction is acetate + ATP = acetyl phosphate + ADP. It functions in the pathway metabolic intermediate biosynthesis; acetyl-CoA biosynthesis; acetyl-CoA from acetate: step 1/2. Catalyzes the formation of acetyl phosphate from acetate and ATP. Can also catalyze the reverse reaction. This chain is Acetate kinase, found in Lachnoclostridium phytofermentans (strain ATCC 700394 / DSM 18823 / ISDg) (Clostridium phytofermentans).